A 334-amino-acid chain; its full sequence is Phosphate acyltransferase (334 aa).

It belongs to the PlsX family. In terms of assembly, homodimer. Probably interacts with PlsY.

It localises to the cytoplasm. It carries out the reaction a fatty acyl-[ACP] + phosphate = an acyl phosphate + holo-[ACP]. It participates in lipid metabolism; phospholipid metabolism. In terms of biological role, catalyzes the reversible formation of acyl-phosphate (acyl-PO(4)) from acyl-[acyl-carrier-protein] (acyl-ACP). This enzyme utilizes acyl-ACP as fatty acyl donor, but not acyl-CoA. This chain is Phosphate acyltransferase, found in Caldicellulosiruptor bescii (strain ATCC BAA-1888 / DSM 6725 / KCTC 15123 / Z-1320) (Anaerocellum thermophilum).